We begin with the raw amino-acid sequence, 538 residues long: Phosphoenolpyruvate carboxykinase (ATP) (538 aa).

Positions 64, 205, and 211 each coordinate substrate. ATP is bound by residues Lys-211, His-230, and 246-254 (GLSGTGKTT). Mn(2+) contacts are provided by Lys-211 and His-230. Asp-267 contributes to the Mn(2+) binding site. ATP is bound by residues Glu-295, Arg-331, 447–448 (RI), and Thr-453. A substrate-binding site is contributed by Arg-331.

Belongs to the phosphoenolpyruvate carboxykinase (ATP) family. As to quaternary structure, monomer. Requires Mn(2+) as cofactor.

It is found in the cytoplasm. The enzyme catalyses oxaloacetate + ATP = phosphoenolpyruvate + ADP + CO2. The protein operates within carbohydrate biosynthesis; gluconeogenesis. In terms of biological role, involved in the gluconeogenesis. Catalyzes the conversion of oxaloacetate (OAA) to phosphoenolpyruvate (PEP) through direct phosphoryl transfer between the nucleoside triphosphate and OAA. The sequence is that of Phosphoenolpyruvate carboxykinase (ATP) from Mannheimia succiniciproducens (strain KCTC 0769BP / MBEL55E).